A 124-amino-acid polypeptide reads, in one-letter code: uncharacterized protein (124 aa).

Interacts with dil1.

This is an uncharacterized protein from Schizosaccharomyces pombe (strain 972 / ATCC 24843) (Fission yeast).